A 111-amino-acid polypeptide reads, in one-letter code: Disintegrin DS-AN (111 aa).

Residues 1–20 (MIQVLLVIICLAVFPYQGSC) form the signal peptide. A propeptide spanning residues 21-47 (IILESGNVNDYEIVYPKKLIVLPTGAM) is cleaved from the precursor. The Disintegrin domain maps to 47–111 (MNSPHPCCDP…PDCPRNPYKD (65 aa)). 4 disulfides stabilise this stretch: Cys-53/Cys-76, Cys-67/Cys-73, Cys-72/Cys-97, and Cys-85/Cys-104. A Cell attachment site motif is present at residues 89–91 (RGD).

In terms of assembly, heterodimer; disulfide-linked.

It localises to the secreted. In terms of biological role, inhibits ADP-induced platelet aggregation in human platelet-rich plasma (IC(50) is 8 uM). This chain is Disintegrin DS-AN, found in Atheris nitschei (Great lakes bush viper).